The following is a 478-amino-acid chain: Dihydrolipoyl dehydrogenase (478 aa).

Residues 36–45 (ERYSTLGGVC), Lys-54, and Ala-117 contribute to the FAD site. A disulfide bond links Cys-45 and Cys-50. Residues 183-187 (GGGII), Glu-206, Val-239, and 270-273 (AIGR) each bind NAD(+). FAD contacts are provided by Asp-313 and Ala-321. The active-site Proton acceptor is His-445.

This sequence belongs to the class-I pyridine nucleotide-disulfide oxidoreductase family. Homodimer. The cofactor is FAD.

Its subcellular location is the cytoplasm. It carries out the reaction N(6)-[(R)-dihydrolipoyl]-L-lysyl-[protein] + NAD(+) = N(6)-[(R)-lipoyl]-L-lysyl-[protein] + NADH + H(+). In terms of biological role, lipoamide dehydrogenase is a component of the alpha-ketoacid dehydrogenase complexes. This chain is Dihydrolipoyl dehydrogenase (lpdA), found in Haemophilus influenzae (strain ATCC 51907 / DSM 11121 / KW20 / Rd).